A 406-amino-acid polypeptide reads, in one-letter code: Bifunctional enzyme Fae/Hps (406 aa).

Positions 1–164 are formaldehyde-activating enzyme; it reads MSDIYEIGEA…AEKDRGTHPI (164 aa). Histidine 20 acts as the Proton donor in catalysis. Substrate-binding residues include aspartate 22, leucine 51, lysine 69, threonine 71, and glutamine 86. The interval 165 to 406 is 3-hexulose-6-phosphate synthase; sequence MGFKAMKLWN…RLALDEDEKI (242 aa).

The protein in the N-terminal section; belongs to the formaldehyde-activating enzyme family. In the C-terminal section; belongs to the HPS/KGPDC family. HPS subfamily.

The enzyme catalyses 5,6,7,8-tetrahydromethanopterin + formaldehyde = 5,10-methylenetetrahydromethanopterin + H2O. It catalyses the reaction D-ribulose 5-phosphate + formaldehyde = D-arabino-hex-3-ulose 6-phosphate. It functions in the pathway carbohydrate biosynthesis; D-ribose 5-phosphate biosynthesis. Functionally, catalyzes the condensation of formaldehyde with tetrahydromethanopterin (H(4)MPT) to 5,10-methylenetetrahydromethanopterin. In terms of biological role, catalyzes the reversible formation of ribulose-5-phosphate and formaldehyde from 3-hexulose-6-phosphate. This chain is Bifunctional enzyme Fae/Hps, found in Methanosphaera stadtmanae (strain ATCC 43021 / DSM 3091 / JCM 11832 / MCB-3).